The chain runs to 447 residues: Na(+)/H(+) antiporter NhaA 2 (447 aa).

10 helical membrane passes run 34–54 (VGGV…NSPW), 77–97 (LTLG…VVGL), 115–135 (ALPI…FVLV), 146–166 (GWAI…AVIG), 176–196 (FLLT…AVFY), 200–220 (INGL…LCVQ), 290–310 (VSAG…SIGG), 321–341 (PITL…IVLT), 359–379 (WVDV…SLLI), and 393–413 (FVKI…AVVL).

The protein belongs to the NhaA Na(+)/H(+) (TC 2.A.33) antiporter family.

It is found in the cell membrane. It catalyses the reaction Na(+)(in) + 2 H(+)(out) = Na(+)(out) + 2 H(+)(in). Its function is as follows. Na(+)/H(+) antiporter that extrudes sodium in exchange for external protons. The sequence is that of Na(+)/H(+) antiporter NhaA 2 from Mycolicibacterium gilvum (strain PYR-GCK) (Mycobacterium gilvum (strain PYR-GCK)).